Consider the following 1372-residue polypeptide: DNA-directed RNA polymerase subunit beta (1372 aa).

It belongs to the RNA polymerase beta chain family. The RNAP catalytic core consists of 2 alpha, 1 beta, 1 beta' and 1 omega subunit. When a sigma factor is associated with the core the holoenzyme is formed, which can initiate transcription.

It catalyses the reaction RNA(n) + a ribonucleoside 5'-triphosphate = RNA(n+1) + diphosphate. Its function is as follows. DNA-dependent RNA polymerase catalyzes the transcription of DNA into RNA using the four ribonucleoside triphosphates as substrates. This chain is DNA-directed RNA polymerase subunit beta, found in Nitratidesulfovibrio vulgaris (strain DSM 19637 / Miyazaki F) (Desulfovibrio vulgaris).